The following is a 589-amino-acid chain: MSPTNVQVTDYHLNQSKTDTTNLWSTDDDASVMEAFIGGGSDHSSLFPPLPPPPLPQVNEDNLQQRLQALIEGANENWTYAVFWQSSHGFAGEDNNNNNTVLLGWGDGYYKGEEEKSRKKKSNPASAAEQEHRKRVIRELNSLISGGVGGGDEAGDEEVTDTEWFFLVSMTQSFVKGTGLPGQAFSNSDTIWLSGSNALAGSSCERARQGQIYGLQTMVCVATENGVVELGSSEIIHQSSDLVDKVDTFFNFNNGGGEFGSWAFNLNPDQGENDPGLWISEPNGVDSGLVAAPVMNNGGNDSTSNSDSQPISKLCNGSSVENPNPKVLKSCEMVNFKNGIENGQEEDSSNKKRSPVSNNEEGMLSFTSVLPCDSNHSDLEASVAKEAESNRVVVEPEKKPRKRGRKPANGREEPLNHVEAERQRREKLNQRFYSLRAVVPNVSKMDKASLLGDAISYISELKSKLQKAESDKEELQKQIDVMNKEAGNAKSSVKDRKCLNQESSVLIEMEVDVKIIGWDAMIRIQCSKRNHPGAKFMEALKELDLEVNHASLSVVNDLMIQQATVKMGNQFFTQDQLKVALTEKVGECP.

The tract at residues 99–150 is JAZ-interaction domain; sequence NTVLLGWGDGYYKGEEEKSRKKKSNPASAAEQEHRKRVIRELNSLISGGVGG. Disordered regions lie at residues 114 to 133, 291 to 326, 340 to 359, and 381 to 422; these read EEKSRKKKSNPASAAEQEHR, AAPVMNNGGNDSTSNSDSQPISKLCNGSSVENPNPK, IENGQEEDSSNKKRSPVSNN, and ASVA…EAER. Residues 296–308 show a composition bias toward low complexity; that stretch reads NNGGNDSTSNSDS. Residues 309–322 show a composition bias toward polar residues; sequence QPISKLCNGSSVEN. Basic and acidic residues predominate over residues 381 to 398; sequence ASVAKEAESNRVVVEPEK. Residues 399–408 are compositionally biased toward basic residues; that stretch reads KPRKRGRKPA. Over residues 409-422 the composition is skewed to basic and acidic residues; sequence NGREEPLNHVEAER. The bHLH domain maps to 412–461; sequence EEPLNHVEAERQRREKLNQRFYSLRAVVPNVSKMDKASLLGDAISYISEL.

Homo- and heterodimer. Interacts with MYB28, MYB29, MYB34, MYB51, MYB76, MYB122, MYC3, AFPH2/NINJA and the JAZ repressors TIFY10A/JAZ1, TIFY10B/JAZ2, TIFY6B/JAZ3, TIFY6A/JAZ4, TIFY11A/JAZ5, TIFY11B/JAZ6, TIFY5B/JAZ7, TIFY5A/JAZ8, TIFY7/JAZ9, TIFY9/JAZ10, TIFY3A/JAZ11 and TIFY3B/JAZ12. In terms of tissue distribution, expressed constitutively at low levels. Preferentially expressed in vascular tissues.

It localises to the nucleus. Its function is as follows. Transcription factor involved in jasmonic acid (JA) gene regulation. With MYC2 and MYC3, controls additively subsets of JA-dependent responses. Can form complexes with all known glucosinolate-related MYBs to regulate glucosinolate biosynthesis. Binds to the G-box (5'-CACGTG-3') of promoters. Activates multiple TIFY/JAZ promoters. In Arabidopsis thaliana (Mouse-ear cress), this protein is Transcription factor MYC4 (MYC4).